Reading from the N-terminus, the 112-residue chain is Reprimo-like protein (112 aa).

The helical transmembrane segment at V59–L79 threads the bilayer.

It belongs to the reprimo family.

Its subcellular location is the membrane. This Xenopus laevis (African clawed frog) protein is Reprimo-like protein (rprml).